The chain runs to 367 residues: BTB/POZ domain-containing protein Tiwaz (367 aa).

Disordered regions lie at residues Leu-16–Leu-46 and Ser-62–Thr-87. Positions Cys-28 to Asp-45 are enriched in basic and acidic residues. Residues Ala-135–Glu-205 form the BTB domain. Residues Gly-240–Ser-261 form a disordered region.

In terms of biological role, functions with the transcription factor TfAP-2 to regulate octopamine neuronal signaling pathways that control behaviors such as male aggression, male mating, and the initiation of feeding. Required for TfAP-2 transcriptional activity in octopaminergic neurons. Functions with TfAP-2 to regulate expression of genes which are involved in promoting octopamine production and secretion from octopaminergic neurons, such as Tbh and Vmat. Octopamine then modulates feeding and male aggression by regulating the expression of the satiation hormone Dsk in insulin-producing cells (IPCs). Functions with octopamine and Dsk as part of a negative feedback loop to prevent overeating; acts with TfAP-2 to regulate octopamine signaling pathways that initiate feeding, then octopamine activates expression of Dsk which inhibits consummatory behavior. May also be involved in negatively regulating nociception in larvae to prevent spontaneous pain and hyperalgesia. The protein is BTB/POZ domain-containing protein Tiwaz of Drosophila melanogaster (Fruit fly).